The sequence spans 117 residues: Large ribosomal subunit protein uL22 (117 aa).

Belongs to the universal ribosomal protein uL22 family. In terms of assembly, part of the 50S ribosomal subunit.

Functionally, this protein binds specifically to 23S rRNA; its binding is stimulated by other ribosomal proteins, e.g. L4, L17, and L20. It is important during the early stages of 50S assembly. It makes multiple contacts with different domains of the 23S rRNA in the assembled 50S subunit and ribosome. The globular domain of the protein is located near the polypeptide exit tunnel on the outside of the subunit, while an extended beta-hairpin is found that lines the wall of the exit tunnel in the center of the 70S ribosome. The protein is Large ribosomal subunit protein uL22 of Lactobacillus delbrueckii subsp. bulgaricus (strain ATCC 11842 / DSM 20081 / BCRC 10696 / JCM 1002 / NBRC 13953 / NCIMB 11778 / NCTC 12712 / WDCM 00102 / Lb 14).